The chain runs to 367 residues: uncharacterized protein (367 aa).

Residues 4–234 form the ABC transporter domain; sequence LTFEHVKKSY…PANLFVAGFI (231 aa). An ATP-binding site is contributed by 36 to 43; sequence GPSGCGKS.

Belongs to the ABC transporter superfamily.

This is an uncharacterized protein from Bacillus subtilis (strain 168).